The chain runs to 450 residues: Tubulin alpha chain (450 aa).

A GTP-binding site is contributed by Gln11. Lys40 carries the N6-acetyllysine modification. GTP-binding residues include Glu71, Ser140, Gly144, Thr145, Thr179, Asn206, and Asn228. Glu71 is a Mg(2+) binding site. Glu254 is an active-site residue. Residues 431–450 (DYEEVGTDSVGEEDEEGEEY) are disordered.

This sequence belongs to the tubulin family. In terms of assembly, dimer of alpha and beta chains. A typical microtubule is a hollow water-filled tube with an outer diameter of 25 nm and an inner diameter of 15 nM. Alpha-beta heterodimers associate head-to-tail to form protofilaments running lengthwise along the microtubule wall with the beta-tubulin subunit facing the microtubule plus end conferring a structural polarity. Microtubules usually have 13 protofilaments but different protofilament numbers can be found in some organisms and specialized cells. Mg(2+) is required as a cofactor. In terms of processing, some glutamate residues at the C-terminus are polyglycylated, resulting in polyglycine chains on the gamma-carboxyl group. Glycylation is mainly limited to tubulin incorporated into axonemes (cilia and flagella) whereas glutamylation is prevalent in neuronal cells, centrioles, axonemes, and the mitotic spindle. Both modifications can coexist on the same protein on adjacent residues, and lowering polyglycylation levels increases polyglutamylation, and reciprocally. The precise function of polyglycylation is still unclear. Post-translationally, some glutamate residues at the C-terminus are polyglutamylated, resulting in polyglutamate chains on the gamma-carboxyl group. Polyglutamylation plays a key role in microtubule severing by spastin (SPAST). SPAST preferentially recognizes and acts on microtubules decorated with short polyglutamate tails: severing activity by SPAST increases as the number of glutamates per tubulin rises from one to eight, but decreases beyond this glutamylation threshold. Acetylation of alpha chains at Lys-40 is located inside the microtubule lumen. This modification has been correlated with increased microtubule stability, intracellular transport and ciliary assembly. In terms of processing, undergoes a tyrosination/detyrosination cycle, the cyclic removal and re-addition of a C-terminal tyrosine residue by the enzymes tubulin tyrosine carboxypeptidase (MATCAP, VASH1 or VASH2) and tubulin tyrosine ligase (TTL), respectively. Post-translationally, tyrosination promotes microtubule interaction with CAP-Gly microtubule plus-end tracking proteins. Tyrosinated tubulins regulate the initiation of dynein-driven motility. Detyrosination is involved in metaphase plate congression by guiding chromosomes during mitosis. Detyrosination increases microtubules-dependent mechanotransduction in dystrophic cardiac and skeletal muscle. In cardiomyocytes, detyrosinated microtubules are required to resist to contractile compression during contraction.

It is found in the cytoplasm. It localises to the cytoskeleton. It carries out the reaction GTP + H2O = GDP + phosphate + H(+). Its function is as follows. Tubulin is the major constituent of microtubules, a cylinder consisting of laterally associated linear protofilaments composed of alpha- and beta-tubulin heterodimers. Microtubules grow by the addition of GTP-tubulin dimers to the microtubule end, where a stabilizing cap forms. Below the cap, tubulin dimers are in GDP-bound state, owing to GTPase activity of alpha-tubulin. This chain is Tubulin alpha chain, found in Oncorhynchus keta (Chum salmon).